Reading from the N-terminus, the 186-residue chain is dCTP deaminase (186 aa).

107–112 is a binding site for dCTP; the sequence is KSTYAR. Glu-133 acts as the Proton donor/acceptor in catalysis. The dCTP site is built by Gln-152, Tyr-166, Lys-175, and Gln-176.

The protein belongs to the dCTP deaminase family. In terms of assembly, homotrimer.

It catalyses the reaction dCTP + H2O + H(+) = dUTP + NH4(+). It participates in pyrimidine metabolism; dUMP biosynthesis; dUMP from dCTP (dUTP route): step 1/2. Its function is as follows. Catalyzes the deamination of dCTP to dUTP. The polypeptide is dCTP deaminase (Wolinella succinogenes (strain ATCC 29543 / DSM 1740 / CCUG 13145 / JCM 31913 / LMG 7466 / NCTC 11488 / FDC 602W) (Vibrio succinogenes)).